Here is a 330-residue protein sequence, read N- to C-terminus: CRISPR-associated endonuclease Cas1 (330 aa).

Mn(2+) contacts are provided by Glu154, His222, and Glu237.

Belongs to the CRISPR-associated endonuclease Cas1 family. As to quaternary structure, homodimer, forms a heterotetramer with a Cas2 homodimer. The cofactor is Mg(2+). Mn(2+) serves as cofactor.

Functionally, CRISPR (clustered regularly interspaced short palindromic repeat), is an adaptive immune system that provides protection against mobile genetic elements (viruses, transposable elements and conjugative plasmids). CRISPR clusters contain spacers, sequences complementary to antecedent mobile elements, and target invading nucleic acids. CRISPR clusters are transcribed and processed into CRISPR RNA (crRNA). Acts as a dsDNA endonuclease. Involved in the integration of spacer DNA into the CRISPR cassette. The polypeptide is CRISPR-associated endonuclease Cas1 (Clostridium perfringens (strain SM101 / Type A)).